The sequence spans 67 residues: MLYPSIDNLLLKIDSKYSLVTVAAKRARYMQLENDKGVLPSYQSDKFVGKALEEIHAGKLVLQNDEK.

Belongs to the RNA polymerase subunit omega family. In terms of assembly, the RNAP catalytic core consists of 2 alpha, 1 beta, 1 beta' and 1 omega subunit. When a sigma factor is associated with the core the holoenzyme is formed, which can initiate transcription.

It catalyses the reaction RNA(n) + a ribonucleoside 5'-triphosphate = RNA(n+1) + diphosphate. Promotes RNA polymerase assembly. Latches the N- and C-terminal regions of the beta' subunit thereby facilitating its interaction with the beta and alpha subunits. The sequence is that of DNA-directed RNA polymerase subunit omega from Listeria innocua serovar 6a (strain ATCC BAA-680 / CLIP 11262).